The following is an 88-amino-acid chain: Putative membrane protein insertion efficiency factor (88 aa).

The tract at residues 66-88 (DFVPPKKDKNADSEHSCKAHHHH) is disordered. Residues 69–82 (PPKKDKNADSEHSC) are compositionally biased toward basic and acidic residues.

The protein belongs to the UPF0161 family.

It localises to the cell membrane. Its function is as follows. Could be involved in insertion of integral membrane proteins into the membrane. The chain is Putative membrane protein insertion efficiency factor from Listeria monocytogenes serotype 4a (strain HCC23).